The primary structure comprises 170 residues: NADH-quinone oxidoreductase subunit B (170 aa).

Positions 37, 38, 102, and 131 each coordinate [4Fe-4S] cluster.

Belongs to the complex I 20 kDa subunit family. NDH-1 is composed of 14 different subunits. Subunits NuoB, C, D, E, F, and G constitute the peripheral sector of the complex. [4Fe-4S] cluster serves as cofactor.

It localises to the cell inner membrane. It catalyses the reaction a quinone + NADH + 5 H(+)(in) = a quinol + NAD(+) + 4 H(+)(out). In terms of biological role, NDH-1 shuttles electrons from NADH, via FMN and iron-sulfur (Fe-S) centers, to quinones in the respiratory chain. The immediate electron acceptor for the enzyme in this species is believed to be ubiquinone. Couples the redox reaction to proton translocation (for every two electrons transferred, four hydrogen ions are translocated across the cytoplasmic membrane), and thus conserves the redox energy in a proton gradient. The polypeptide is NADH-quinone oxidoreductase subunit B (Geobacter sp. (strain M21)).